We begin with the raw amino-acid sequence, 199 residues long: Probable GTP-binding protein EngB (199 aa).

One can recognise an EngB-type G domain in the interval 28–199 (DLPEIALAGR…DSWDAILEQV (172 aa)). Residues 36–43 (GRSNVGKS), 63–67 (GKTQL), 81–84 (DVPG), 148–151 (TKAD), and 180–182 (FSS) contribute to the GTP site. Mg(2+) contacts are provided by serine 43 and threonine 65.

This sequence belongs to the TRAFAC class TrmE-Era-EngA-EngB-Septin-like GTPase superfamily. EngB GTPase family. It depends on Mg(2+) as a cofactor.

Its function is as follows. Necessary for normal cell division and for the maintenance of normal septation. In Streptococcus pyogenes serotype M18 (strain MGAS8232), this protein is Probable GTP-binding protein EngB.